The following is a 270-amino-acid chain: Diaminopimelate epimerase (270 aa).

Asparagine 15, glutamine 49, and asparagine 66 together coordinate substrate. The active-site Proton donor is the cysteine 75. Residues 76 to 77 (GN), asparagine 155, asparagine 187, and 204 to 205 (ER) contribute to the substrate site. Cysteine 213 (proton acceptor) is an active-site residue. 214-215 (GS) is a substrate binding site.

Belongs to the diaminopimelate epimerase family. Homodimer.

Its subcellular location is the cytoplasm. The enzyme catalyses (2S,6S)-2,6-diaminopimelate = meso-2,6-diaminopimelate. It functions in the pathway amino-acid biosynthesis; L-lysine biosynthesis via DAP pathway; DL-2,6-diaminopimelate from LL-2,6-diaminopimelate: step 1/1. Its function is as follows. Catalyzes the stereoinversion of LL-2,6-diaminopimelate (L,L-DAP) to meso-diaminopimelate (meso-DAP), a precursor of L-lysine and an essential component of the bacterial peptidoglycan. The protein is Diaminopimelate epimerase of Rickettsia prowazekii (strain Madrid E).